Here is a 513-residue protein sequence, read N- to C-terminus: 2,3-bisphosphoglycerate-independent phosphoglycerate mutase (513 aa).

The Mn(2+) site is built by Asp-12 and Ser-62. The active-site Phosphoserine intermediate is the Ser-62. Substrate is bound by residues His-123, 153 to 154, Arg-185, Arg-191, 260 to 263, and Lys-333; these read RD and RPDR. Mn(2+)-binding residues include Asp-400, His-404, Asp-441, His-442, and His-460.

This sequence belongs to the BPG-independent phosphoglycerate mutase family. In terms of assembly, monomer. It depends on Mn(2+) as a cofactor.

It carries out the reaction (2R)-2-phosphoglycerate = (2R)-3-phosphoglycerate. The protein operates within carbohydrate degradation; glycolysis; pyruvate from D-glyceraldehyde 3-phosphate: step 3/5. Catalyzes the interconversion of 2-phosphoglycerate and 3-phosphoglycerate. This chain is 2,3-bisphosphoglycerate-independent phosphoglycerate mutase, found in Clostridium tetani (strain Massachusetts / E88).